The chain runs to 199 residues: Holliday junction branch migration complex subunit RuvA (199 aa).

The interval 1 to 64 is domain I; the sequence is MIAFLKGAVF…ENEFKLFGFL (64 aa). The segment at 65 to 143 is domain II; the sequence is DQDELRLFKT…ELKLVEVEKE (79 aa). Residues 144-148 form a flexible linker region; sequence QRPLL. Residues 148-199 form a domain III region; that stretch reads LDELMEALEILGYSRSEVLPAIMDLNRNKQLGNIVEENIKLVLKAKAQEMRR.

This sequence belongs to the RuvA family. Homotetramer. Forms an RuvA(8)-RuvB(12)-Holliday junction (HJ) complex. HJ DNA is sandwiched between 2 RuvA tetramers; dsDNA enters through RuvA and exits via RuvB. An RuvB hexamer assembles on each DNA strand where it exits the tetramer. Each RuvB hexamer is contacted by two RuvA subunits (via domain III) on 2 adjacent RuvB subunits; this complex drives branch migration. In the full resolvosome a probable DNA-RuvA(4)-RuvB(12)-RuvC(2) complex forms which resolves the HJ.

It localises to the cytoplasm. Functionally, the RuvA-RuvB-RuvC complex processes Holliday junction (HJ) DNA during genetic recombination and DNA repair, while the RuvA-RuvB complex plays an important role in the rescue of blocked DNA replication forks via replication fork reversal (RFR). RuvA specifically binds to HJ cruciform DNA, conferring on it an open structure. The RuvB hexamer acts as an ATP-dependent pump, pulling dsDNA into and through the RuvAB complex. HJ branch migration allows RuvC to scan DNA until it finds its consensus sequence, where it cleaves and resolves the cruciform DNA. This is Holliday junction branch migration complex subunit RuvA from Syntrophomonas wolfei subsp. wolfei (strain DSM 2245B / Goettingen).